Here is a 237-residue protein sequence, read N- to C-terminus: UDP-2,3-diacylglucosamine hydrolase (237 aa).

Positions 9, 11, 42, 80, and 115 each coordinate Mn(2+). 80-81 (NR) serves as a coordination point for substrate. Positions 123, 161, 165, 168, and 196 each coordinate substrate. Mn(2+) contacts are provided by histidine 196 and histidine 198.

It belongs to the LpxH family. Requires Mn(2+) as cofactor.

The protein localises to the cell inner membrane. The catalysed reaction is UDP-2-N,3-O-bis[(3R)-3-hydroxytetradecanoyl]-alpha-D-glucosamine + H2O = 2-N,3-O-bis[(3R)-3-hydroxytetradecanoyl]-alpha-D-glucosaminyl 1-phosphate + UMP + 2 H(+). It participates in glycolipid biosynthesis; lipid IV(A) biosynthesis; lipid IV(A) from (3R)-3-hydroxytetradecanoyl-[acyl-carrier-protein] and UDP-N-acetyl-alpha-D-glucosamine: step 4/6. Its function is as follows. Hydrolyzes the pyrophosphate bond of UDP-2,3-diacylglucosamine to yield 2,3-diacylglucosamine 1-phosphate (lipid X) and UMP by catalyzing the attack of water at the alpha-P atom. Involved in the biosynthesis of lipid A, a phosphorylated glycolipid that anchors the lipopolysaccharide to the outer membrane of the cell. The protein is UDP-2,3-diacylglucosamine hydrolase of Haemophilus influenzae (strain PittGG).